The primary structure comprises 582 residues: Regulatory solute carrier protein family 1 member 1 (582 aa).

Disordered regions lie at residues 1–32 (MSSL…ARSV), 56–76 (KASA…LQVL), 143–180 (EKSW…VPQD), 303–325 (VDMS…HGQP), 363–384 (VTCQ…SGRR), 390–409 (LTPS…SESG), 426–452 (ASTS…ESAR), and 483–529 (SEGA…LSTP). Residues 16–32 (SGQSPEVGSPTSLARSV) are compositionally biased toward polar residues. Polar residues predominate over residues 148 to 179 (PENQTPSPVNGLQQHRETGSVQREAGQQSVPQ). Over residues 390-408 (LTPSDQYSQGSCHQATSES) the composition is skewed to polar residues. 2 stretches are compositionally biased toward basic and acidic residues: residues 438 to 452 (SPDR…ESAR) and 490 to 503 (PSEH…DRPE). Positions 536–576 (IFPAADVDRILGAGFTLQEALGALHRVGGNADLALLVLLAK) constitute a UBA domain.

Interacts with YRDC. In terms of tissue distribution, expressed in epithelial and subepithelial cells of small intestine.

The protein resides in the cell membrane. It is found in the nucleus. The protein localises to the golgi apparatus. It localises to the trans-Golgi network. In terms of biological role, mediates transcriptional and post-transcriptional regulation of SLC5A1. Inhibits a dynamin and PKC-dependent exocytotic pathway of SLC5A1. Also involved in transcriptional regulation of SLC22A2. Exhibits glucose-dependent, short-term inhibition of SLC5A1 and SLC22A2 by inhibiting the release of vesicles from the trans-Golgi network. Regulates the expression of SLC5A1 in a tissue-specific manner and is specifically involved in its regulation in the small intestine. The chain is Regulatory solute carrier protein family 1 member 1 (Rsc1a1) from Mus musculus (Mouse).